A 176-amino-acid polypeptide reads, in one-letter code: dCTP deaminase (176 aa).

DCTP-binding positions include arginine 99 to arginine 104 and aspartate 115. Glutamate 125 serves as the catalytic Proton donor/acceptor. Glutamine 163 is a binding site for dCTP.

Belongs to the dCTP deaminase family. Homotrimer.

It carries out the reaction dCTP + H2O + H(+) = dUTP + NH4(+). Its pathway is pyrimidine metabolism; dUMP biosynthesis; dUMP from dCTP (dUTP route): step 1/2. Catalyzes the deamination of dCTP to dUTP. This is dCTP deaminase from Pyrobaculum islandicum (strain DSM 4184 / JCM 9189 / GEO3).